A 436-amino-acid chain; its full sequence is 3-ketoacyl-CoA thiolase (436 aa).

The active-site Acyl-thioester intermediate is the Cys99. Active-site proton acceptor residues include His392 and Cys422.

This sequence belongs to the thiolase-like superfamily. Thiolase family. In terms of assembly, heterotetramer of two alpha chains (FadJ) and two beta chains (FadI).

Its subcellular location is the cytoplasm. The enzyme catalyses an acyl-CoA + acetyl-CoA = a 3-oxoacyl-CoA + CoA. It participates in lipid metabolism; fatty acid beta-oxidation. Functionally, catalyzes the final step of fatty acid oxidation in which acetyl-CoA is released and the CoA ester of a fatty acid two carbons shorter is formed. This is 3-ketoacyl-CoA thiolase from Pseudoalteromonas translucida (strain TAC 125).